A 414-amino-acid polypeptide reads, in one-letter code: Cytochrome b (414 aa).

Helical transmembrane passes span 40–60 (FFGS…VWLA) and 84–104 (GWLI…VIYL). Heme b is bound by residues His91 and His105. 8 helical membrane passes run 121 to 141 (LLWM…FFGY), 154 to 174 (QVIV…SVWV), 188 to 208 (FFAF…LHIV), 252 to 272 (LMGV…NPTM), 294 to 314 (IAPV…PPMY), 317 to 337 (QFPG…LPWL), 351 to 371 (IFKW…WLGI), and 378 to 398 (YTLL…LMPI). 2 residues coordinate heme b: His192 and His206.

The protein belongs to the cytochrome b family. As to quaternary structure, the main subunits of complex b-c1 are: cytochrome b, cytochrome c1 and the Rieske protein. Heme b is required as a cofactor.

The protein localises to the cell membrane. Functionally, component of the ubiquinol-cytochrome c reductase complex (complex III or cytochrome b-c1 complex), which is a respiratory chain that generates an electrochemical potential coupled to ATP synthesis. This chain is Cytochrome b (petB), found in Allochromatium vinosum (strain ATCC 17899 / DSM 180 / NBRC 103801 / NCIMB 10441 / D) (Chromatium vinosum).